A 251-amino-acid chain; its full sequence is Aliphatic sulfonates import ATP-binding protein SsuB (251 aa).

Residues 3-231 (VSINEVSKYF…PRSKNSESFQ (229 aa)) form the ABC transporter domain. 39–46 (GPSGCGKS) is an ATP binding site.

It belongs to the ABC transporter superfamily. Aliphatic sulfonates importer (TC 3.A.1.17.2) family. As to quaternary structure, the complex is composed of two ATP-binding proteins (SsuB), two transmembrane proteins (SsuC) and a solute-binding protein (SsuA).

Its subcellular location is the cell membrane. The enzyme catalyses ATP + H2O + aliphatic sulfonate-[sulfonate-binding protein]Side 1 = ADP + phosphate + aliphatic sulfonateSide 2 + [sulfonate-binding protein]Side 1.. Its function is as follows. Part of the ABC transporter complex SsuABC involved in aliphatic sulfonates import. Responsible for energy coupling to the transport system. The sequence is that of Aliphatic sulfonates import ATP-binding protein SsuB from Bacillus cereus (strain ZK / E33L).